The sequence spans 692 residues: ATP-dependent DNA helicase DinG (692 aa).

The region spanning 16-293 (NLGNQLDNFI…AELAEYKKAA (278 aa)) is the Helicase ATP-binding domain. 56–63 (AGTGIGKS) lines the ATP pocket. Cys-123 is a binding site for [4Fe-4S] cluster. The DEAH box motif lies at 134–137 (NNDQ). Positions 192 and 202 each coordinate [4Fe-4S] cluster. The short motif at 247 to 250 (DEAH) is the DEAH box element. Positions 514–692 (LIKTLPEYLE…PPFKRVIEYS (179 aa)) constitute a Helicase C-terminal domain.

Belongs to the helicase family. DinG subfamily. Type 1 sub-subfamily. Requires [4Fe-4S] cluster as cofactor.

It carries out the reaction Couples ATP hydrolysis with the unwinding of duplex DNA at the replication fork by translocating in the 5'-3' direction. This creates two antiparallel DNA single strands (ssDNA). The leading ssDNA polymer is the template for DNA polymerase III holoenzyme which synthesizes a continuous strand.. It catalyses the reaction ATP + H2O = ADP + phosphate + H(+). Functionally, DNA-dependent ATPase and 5'-3' DNA helicase. Unwinds D-loops, R-loops, forked DNA and G-quadruplex DNA. In Photobacterium profundum (strain SS9), this protein is ATP-dependent DNA helicase DinG.